Reading from the N-terminus, the 835-residue chain is Ion-translocating oxidoreductase complex subunit C (835 aa).

2 consecutive 4Fe-4S ferredoxin-type domains span residues 368–397 (YAPP…QQLY) and 407–436 (KSEE…IQYF). 8 residues coordinate [4Fe-4S] cluster: C377, C380, C383, C387, C416, C419, C422, and C426. Residues 468–489 (AREEQERKARAQKAMEARRQEM) show a composition bias toward basic and acidic residues. Disordered stretches follow at residues 468–492 (AREE…MKTA), 540–574 (QRKA…SKSA), 586–618 (KAAQ…AEDP), 634–666 (KAAQ…ADDP), 682–714 (KAAQ…ADDP), 730–762 (KAAQ…AEDP), and 778–811 (KAAQ…EDPR). The span at 552–561 (TQNTDVSQVE) shows a compositional bias: polar residues. Residues 648-657 (SSSNTLSVGN) are compositionally biased toward polar residues. Polar residues-rich tracts occupy residues 745–756 (SSDTLSVGNETE) and 793–804 (SSDTLSVGNETE).

The protein belongs to the 4Fe4S bacterial-type ferredoxin family. RnfC subfamily. As to quaternary structure, the complex is composed of six subunits: RnfA, RnfB, RnfC, RnfD, RnfE and RnfG. It depends on [4Fe-4S] cluster as a cofactor.

It localises to the cell inner membrane. Functionally, part of a membrane-bound complex that couples electron transfer with translocation of ions across the membrane. The chain is Ion-translocating oxidoreductase complex subunit C from Pasteurella multocida (strain Pm70).